The following is a 244-amino-acid chain: 3-deoxy-manno-octulosonate cytidylyltransferase (244 aa).

This sequence belongs to the KdsB family.

The protein localises to the cytoplasm. The catalysed reaction is 3-deoxy-alpha-D-manno-oct-2-ulosonate + CTP = CMP-3-deoxy-beta-D-manno-octulosonate + diphosphate. The protein operates within nucleotide-sugar biosynthesis; CMP-3-deoxy-D-manno-octulosonate biosynthesis; CMP-3-deoxy-D-manno-octulosonate from 3-deoxy-D-manno-octulosonate and CTP: step 1/1. It participates in bacterial outer membrane biogenesis; lipopolysaccharide biosynthesis. Activates KDO (a required 8-carbon sugar) for incorporation into bacterial lipopolysaccharide in Gram-negative bacteria. In Flavobacterium johnsoniae (strain ATCC 17061 / DSM 2064 / JCM 8514 / BCRC 14874 / CCUG 350202 / NBRC 14942 / NCIMB 11054 / UW101) (Cytophaga johnsonae), this protein is 3-deoxy-manno-octulosonate cytidylyltransferase.